We begin with the raw amino-acid sequence, 126 residues long: Prefoldin subunit beta (126 aa).

This sequence belongs to the prefoldin subunit beta family. As to quaternary structure, heterohexamer of two alpha and four beta subunits.

The protein localises to the cytoplasm. Its function is as follows. Molecular chaperone capable of stabilizing a range of proteins. Seems to fulfill an ATP-independent, HSP70-like function in archaeal de novo protein folding. The sequence is that of Prefoldin subunit beta (pfdB) from Pyrobaculum aerophilum (strain ATCC 51768 / DSM 7523 / JCM 9630 / CIP 104966 / NBRC 100827 / IM2).